The primary structure comprises 264 residues: Segregation and condensation protein A (264 aa).

It belongs to the ScpA family. Component of a cohesin-like complex composed of ScpA, ScpB and the Smc homodimer, in which ScpA and ScpB bind to the head domain of Smc. The presence of the three proteins is required for the association of the complex with DNA.

The protein localises to the cytoplasm. Functionally, participates in chromosomal partition during cell division. May act via the formation of a condensin-like complex containing Smc and ScpB that pull DNA away from mid-cell into both cell halves. This is Segregation and condensation protein A from Enterococcus faecalis (strain ATCC 700802 / V583).